The primary structure comprises 181 residues: Disulfide bond formation protein B (181 aa).

The Cytoplasmic segment spans residues 1–13 (MLSVGQWPNKPFA). Residues 14 to 30 (WLLLFLGCSGLLGAALY) traverse the membrane as a helical segment. Residues 31–48 (FQMVLNLEPCVKCVYQRM) are Periplasmic-facing. An intrachain disulfide couples cysteine 40 to cysteine 43. Residues 49–64 (AVIGIGLSAIVGLFGS) form a helical membrane-spanning segment. Topologically, residues 65 to 71 (GLWLTRW) are cytoplasmic. The chain crosses the membrane as a helical span at residues 72 to 89 (AALIGWLYSSYQGLLIAY). Topologically, residues 90–145 (DHWDLQTSKNAFFAVCESAPNFPDWAPMHEWMPGLFAAPGLCGDIDWQWLGLGMPG) are periplasmic. Cysteine 105 and cysteine 131 are joined by a disulfide. A helical membrane pass occupies residues 146 to 164 (WMTVIFAGLLLIGIIVTIC). Residues 165 to 181 (HIISSFTKKDGLVLYHK) are Cytoplasmic-facing.

Belongs to the DsbB family.

It localises to the cell inner membrane. Functionally, required for disulfide bond formation in some periplasmic proteins. Acts by oxidizing the DsbA protein. The polypeptide is Disulfide bond formation protein B (Idiomarina loihiensis (strain ATCC BAA-735 / DSM 15497 / L2-TR)).